A 292-amino-acid polypeptide reads, in one-letter code: uncharacterized protein (292 aa).

A helical transmembrane segment spans residues S17 to M37.

The protein to M.jannaschii MJ0137.

It localises to the membrane. This is an uncharacterized protein from Methanocaldococcus jannaschii (strain ATCC 43067 / DSM 2661 / JAL-1 / JCM 10045 / NBRC 100440) (Methanococcus jannaschii).